The chain runs to 272 residues: Cyanophycinase (272 aa).

Catalysis depends on charge relay system residues Ser-132, Glu-150, and His-174.

Belongs to the peptidase S51 family.

The catalysed reaction is [L-4-(L-arginin-2-N-yl)aspartate](n) + H2O = [L-4-(L-arginin-2-N-yl)aspartate](n-1) + L-4-(L-arginin-2-N-yl)aspartate. Functionally, exopeptidase that catalyzes the hydrolytic cleavage of multi-L-arginyl-poly-L-aspartic acid (cyanophycin; a water-insoluble reserve polymer) into aspartate-arginine dipeptides. The sequence is that of Cyanophycinase (cphB) from Geminocystis herdmanii (strain PCC 6308) (Synechocystis sp. (strain PCC 6308)).